The primary structure comprises 896 residues: Microsomal triglyceride transfer protein large subunit (896 aa).

The first 21 residues, 1–21 (MILLAVLFLCFFSSYSASVKG), serve as a signal peptide directing secretion. One can recognise a Vitellogenin domain in the interval 28 to 659 (LNNERLYKLT…IFQYIGKAEL (632 aa)). C174 and C194 form a disulfide bridge.

In terms of assembly, heterodimer; heterodimerizes with the protein disulfide isomerase (P4HB/PDI). Interacts with APOB. Interacts with PRAP1.

It is found in the endoplasmic reticulum. The protein resides in the golgi apparatus. It catalyses the reaction a 1,2-diacyl-sn-glycero-3-phosphocholine(in) = a 1,2-diacyl-sn-glycero-3-phosphocholine(out). It carries out the reaction a 1,2-diacyl-sn-glycero-3-phosphoethanolamine(in) = a 1,2-diacyl-sn-glycero-3-phosphoethanolamine(out). The catalysed reaction is a cholesterol ester(in) = a cholesterol ester(out). The enzyme catalyses a triacyl-sn-glycerol(in) = a triacyl-sn-glycerol(out). In terms of biological role, catalyzes the transport of triglyceride, cholesteryl ester, and phospholipid between phospholipid surfaces. Required for the assembly and secretion of plasma lipoproteins that contain apolipoprotein B. May be involved in regulating cholesteryl ester biosynthesis in cells that produce lipoproteins. In Rattus norvegicus (Rat), this protein is Microsomal triglyceride transfer protein large subunit (Mttp).